A 351-amino-acid polypeptide reads, in one-letter code: DNA polymerase IV (351 aa).

The UmuC domain maps to 4–185 (IIHVDMDCFF…LPLAKIPGVG (182 aa)). Mg(2+)-binding residues include D8 and D103. Residue E104 is part of the active site.

The protein belongs to the DNA polymerase type-Y family. In terms of assembly, monomer. The cofactor is Mg(2+).

The protein resides in the cytoplasm. The catalysed reaction is DNA(n) + a 2'-deoxyribonucleoside 5'-triphosphate = DNA(n+1) + diphosphate. Its function is as follows. Poorly processive, error-prone DNA polymerase involved in untargeted mutagenesis. Copies undamaged DNA at stalled replication forks, which arise in vivo from mismatched or misaligned primer ends. These misaligned primers can be extended by PolIV. Exhibits no 3'-5' exonuclease (proofreading) activity. May be involved in translesional synthesis, in conjunction with the beta clamp from PolIII. This chain is DNA polymerase IV, found in Salmonella choleraesuis (strain SC-B67).